A 254-amino-acid polypeptide reads, in one-letter code: 5-oxoprolinase subunit A (254 aa).

This sequence belongs to the LamB/PxpA family. As to quaternary structure, forms a complex composed of PxpA, PxpB and PxpC.

It catalyses the reaction 5-oxo-L-proline + ATP + 2 H2O = L-glutamate + ADP + phosphate + H(+). In terms of biological role, catalyzes the cleavage of 5-oxoproline to form L-glutamate coupled to the hydrolysis of ATP to ADP and inorganic phosphate. The sequence is that of 5-oxoprolinase subunit A from Gluconobacter oxydans (strain 621H) (Gluconobacter suboxydans).